The primary structure comprises 529 residues: MTLSPYLQEVAKRRTFAIISHPDAGKTTITEKVLLFGQAIQTAGTVKGRGSSQHAKSDWMEMEKQRGISITTSVMQFPYHDCLVNLLDTPGHEDFSEDTYRTLTAVDCCLMVIDAAKGVEDRTRKLMEVTRLRDTPILTFMNKLDRDIRDPMELLDEVENELKIGCAPITWPIGCGKLFKGVYHLYKDETYLYQTGKGHTIQEVRIVKGLNNPDLDAAVGEDLAQQLRDELELVQGASNEFDEELFLAGEITPVFFGTALGNFGVDHMLDGLVAWAPAPMPRQTDTRTVEASEEKFTGFVFKIQANMDPKHRDRVAFMRVVSGKYEKGMKLRQVRTGKDVVISDALTFMAGDRSHVEEAYPGDILGLHNHGTIQIGDTFTQGEMMKFTGIPNFAPELFRRIRLKDPLKQKQLLKGLVQLSEEGAVQVFRPISNNDLIVGAVGVLQFDVVVARLKSEYNVEAIYESVNVATARWVESADAKKFEEFKRKNETQLALDGGDNLTYIAPTMVNLNLTQERYPDVQFRKTREH.

Residues 11–280 (AKRRTFAIIS…GLVAWAPAPM (270 aa)) form the tr-type G domain. GTP is bound by residues 20-27 (SHPDAGKT), 88-92 (DTPGH), and 142-145 (NKLD).

It belongs to the TRAFAC class translation factor GTPase superfamily. Classic translation factor GTPase family. PrfC subfamily.

Its subcellular location is the cytoplasm. Increases the formation of ribosomal termination complexes and stimulates activities of RF-1 and RF-2. It binds guanine nucleotides and has strong preference for UGA stop codons. It may interact directly with the ribosome. The stimulation of RF-1 and RF-2 is significantly reduced by GTP and GDP, but not by GMP. The protein is Peptide chain release factor 3 of Salmonella agona (strain SL483).